A 299-amino-acid polypeptide reads, in one-letter code: MQTSSEPAASETAALLGKPLADRVMRGVRADLKAWAQLDPPFEPQLVSVLASDDEASQVYVQSKAKRAKKLGVAFRVVDLGAAATQEALEQTLRELSADPAVHGIVLELPLAAGLDADAALLHIAARKDIEGLSPANLALIAAGREPEALLPPTPRSVRFLLRHALGDDLRGLRVAVIGPGRTVGRPLLFMLNNKGATVTLCNEHTRDLAAVLAAQDAVVVAVGKAGLLRPEQVQPEHVVIDAGINVQESGDMVGDALPELPVRAQTPVPGGVGPLTSALMYQNLVRGVKLQRGEPVDD.

NADP(+) contacts are provided by residues 179 to 181 (GPG) and isoleucine 245.

This sequence belongs to the tetrahydrofolate dehydrogenase/cyclohydrolase family. As to quaternary structure, homodimer.

It carries out the reaction (6R)-5,10-methylene-5,6,7,8-tetrahydrofolate + NADP(+) = (6R)-5,10-methenyltetrahydrofolate + NADPH. The catalysed reaction is (6R)-5,10-methenyltetrahydrofolate + H2O = (6R)-10-formyltetrahydrofolate + H(+). It participates in one-carbon metabolism; tetrahydrofolate interconversion. Catalyzes the oxidation of 5,10-methylenetetrahydrofolate to 5,10-methenyltetrahydrofolate and then the hydrolysis of 5,10-methenyltetrahydrofolate to 10-formyltetrahydrofolate. This Deinococcus radiodurans (strain ATCC 13939 / DSM 20539 / JCM 16871 / CCUG 27074 / LMG 4051 / NBRC 15346 / NCIMB 9279 / VKM B-1422 / R1) protein is Bifunctional protein FolD.